The chain runs to 220 residues: Ribonuclease P protein subunit p29 (220 aa).

Phosphoserine is present on Ser-10.

Belongs to the eukaryotic/archaeal RNase P protein component 1 family. Component of nuclear RNase P and RNase MRP ribonucleoproteins. RNase P consists of a catalytic RNA moiety and 10 different protein chains; POP1, POP4, POP5, POP7, RPP14, RPP21, RPP25, RPP30, RPP38 and RPP40. Within the RNase P complex, POP1, POP7 and RPP25 form the 'finger' subcomplex, POP5, RPP14, RPP40 and homodimeric RPP30 form the 'palm' subcomplex, and RPP21, POP4 and RPP38 form the 'wrist' subcomplex. All subunits of the RNase P complex interact with the catalytic RNA. Several subunits of RNase P are also part of the RNase MRP complex. RNase MRP consists of a catalytic RNA moiety and about 8 protein subunits; POP1, POP7, RPP25, RPP30, RPP38, RPP40 and possibly also POP4 and POP5.

It is found in the nucleus. The protein localises to the nucleolus. In terms of biological role, component of ribonuclease P, a ribonucleoprotein complex that generates mature tRNA molecules by cleaving their 5'-ends. The polypeptide is Ribonuclease P protein subunit p29 (POP4) (Pongo abelii (Sumatran orangutan)).